The primary structure comprises 542 residues: CTP synthase (542 aa).

The amidoligase domain stretch occupies residues 1–265 (MARYIFITGG…DQEVLAAFGI (265 aa)). Residue serine 13 coordinates CTP. Residue serine 13 participates in UTP binding. Residue 14–19 (SLGKGL) coordinates ATP. Tyrosine 54 serves as a coordination point for L-glutamine. Aspartate 71 contributes to the ATP binding site. Positions 71 and 139 each coordinate Mg(2+). Residues 146-148 (DIE), 186-191 (KTKPTQ), and lysine 222 contribute to the CTP site. UTP is bound by residues 186 to 191 (KTKPTQ) and lysine 222. 238-240 (RDV) serves as a coordination point for ATP. The Glutamine amidotransferase type-1 domain occupies 291-541 (TIAIVGKYTG…IAAALEQSRL (251 aa)). Glycine 353 is an L-glutamine binding site. Cysteine 380 serves as the catalytic Nucleophile; for glutamine hydrolysis. Residues 381 to 384 (FGMQ), glutamate 404, and arginine 469 contribute to the L-glutamine site. Catalysis depends on residues histidine 514 and glutamate 516.

It belongs to the CTP synthase family. As to quaternary structure, homotetramer.

It catalyses the reaction UTP + L-glutamine + ATP + H2O = CTP + L-glutamate + ADP + phosphate + 2 H(+). It carries out the reaction L-glutamine + H2O = L-glutamate + NH4(+). The enzyme catalyses UTP + NH4(+) + ATP = CTP + ADP + phosphate + 2 H(+). It participates in pyrimidine metabolism; CTP biosynthesis via de novo pathway; CTP from UDP: step 2/2. Its activity is regulated as follows. Allosterically activated by GTP, when glutamine is the substrate; GTP has no effect on the reaction when ammonia is the substrate. The allosteric effector GTP functions by stabilizing the protein conformation that binds the tetrahedral intermediate(s) formed during glutamine hydrolysis. Inhibited by the product CTP, via allosteric rather than competitive inhibition. Its function is as follows. Catalyzes the ATP-dependent amination of UTP to CTP with either L-glutamine or ammonia as the source of nitrogen. Regulates intracellular CTP levels through interactions with the four ribonucleotide triphosphates. This Methylocella silvestris (strain DSM 15510 / CIP 108128 / LMG 27833 / NCIMB 13906 / BL2) protein is CTP synthase.